We begin with the raw amino-acid sequence, 178 residues long: Probable chorismate pyruvate-lyase (178 aa).

Positions 72, 110, and 169 each coordinate substrate.

It belongs to the UbiC family.

It is found in the cytoplasm. The catalysed reaction is chorismate = 4-hydroxybenzoate + pyruvate. It functions in the pathway cofactor biosynthesis; ubiquinone biosynthesis. Its function is as follows. Removes the pyruvyl group from chorismate, with concomitant aromatization of the ring, to provide 4-hydroxybenzoate (4HB) for the ubiquinone pathway. This chain is Probable chorismate pyruvate-lyase, found in Nitrosomonas europaea (strain ATCC 19718 / CIP 103999 / KCTC 2705 / NBRC 14298).